We begin with the raw amino-acid sequence, 244 residues long: MSKLDLNALNELPKVDRILALAETNAELEKLDAEGRVAWALDNLPGEYVLSSSFGIQAAVSLHLVNQIRPDIPVILTDTGYLFPETYRFIDELTDKLKLNLKVYRATESAAWQEARYGKLWEQGVEGIEKYNDINKVEPMNRALKELNAQTWFAGLRREQSGSRANLPVLAIQRGVFKVLPIIDWDNRTIYQYLQKHGLKYHPLWDEGYLSVGDTHTTRKWEPGMSEEETRFFGLKRECGLHEG.

C239 (nucleophile; cysteine thiosulfonate intermediate) is an active-site residue.

Belongs to the PAPS reductase family. CysH subfamily.

The protein resides in the cytoplasm. It catalyses the reaction [thioredoxin]-disulfide + sulfite + adenosine 3',5'-bisphosphate + 2 H(+) = [thioredoxin]-dithiol + 3'-phosphoadenylyl sulfate. It functions in the pathway sulfur metabolism; hydrogen sulfide biosynthesis; sulfite from sulfate: step 3/3. Functionally, catalyzes the formation of sulfite from phosphoadenosine 5'-phosphosulfate (PAPS) using thioredoxin as an electron donor. This is Phosphoadenosine 5'-phosphosulfate reductase from Shigella boydii serotype 4 (strain Sb227).